The sequence spans 391 residues: Transcription factor TCP3 (391 aa).

The segment at 1–34 (MAPDNDHFLDSPSPPLLEMRHHQSATENGGGCGE) is disordered. The TCP domain occupies 49-107 (RKDRHSKVCTAKGPRDRRVRLSAPTAIQFYDVQDRLGFDRPSKAVDWLITKAKSAIDDL). Disordered stretches follow at residues 122–168 (HAAA…PASM), 317–345 (HHHH…PGIH), and 363–391 (FRIP…DSRH). Residues 381 to 391 (KPSSASSDSRH) are compositionally biased toward polar residues.

In terms of assembly, interacts with SPL. Interacts with KIN10; KIN11 and FLZ3. As to expression, expressed in cotyledons, particularly in the vascular region, in leaves, roots, buds, flowers and immature siliques.

Its subcellular location is the nucleus. Its function is as follows. Plays a pivotal role in the control of morphogenesis of shoot organs by negatively regulating the expression of boundary-specific genes such as CUC genes, probably through the induction of miRNA (e.g. miR164). Participates in ovule development. The polypeptide is Transcription factor TCP3 (TCP3) (Arabidopsis thaliana (Mouse-ear cress)).